A 274-amino-acid chain; its full sequence is Copper chaperone for superoxide dismutase (274 aa).

The region spanning 11 to 74 (VCALEFAVQM…LLESTGRQAV (64 aa)) is the HMA domain. Positions 22 and 25 each coordinate Cu cation. Residue Lys-76 forms a Glycyl lysine isopeptide (Lys-Gly) (interchain with G-Cter in ubiquitin) linkage. The segment at 88-234 (AAVAILEGCG…LACGIIARSA (147 aa)) is superoxide dismutase-like. A disulfide bond links Cys-141 and Cys-227. Residues His-147, His-155, His-164, and Asp-167 each coordinate Zn(2+). Glycyl lysine isopeptide (Lys-Gly) (interchain with G-Cter in ubiquitin) cross-links involve residues Lys-189, Lys-216, and Lys-241. The Cu cation site is built by Cys-244 and Cys-246. The residue at position 267 (Ser-267) is a Phosphoserine.

This sequence in the C-terminal section; belongs to the Cu-Zn superoxide dismutase family. As to quaternary structure, homodimer, and heterodimer with SOD1. Interacts with COMMD1. Interacts with XIAP/BIRC4. Interacts with SLC31A1(via C-terminal domain); this interaction is Cu(1+)-mediated. The heterodimer CCS:SOD1 interacts with SLC31A1; this heterotrimer is Cu(1+)-mediated and its maintenance is regulated through SOD1 activation. Cu(2+) is required as a cofactor. Requires Zn(2+) as cofactor. Post-translationally, ubiquitinion by XIAP/BIRC4 leads to enhancement of its chaperone activity toward its physiologic target, SOD1, rather than proteasomal degradation. XIAP/BIRC4 preferentially ubiquitinates at Lys-241. As to expression, ubiquitous.

It is found in the cytoplasm. Functionally, delivers copper to copper zinc superoxide dismutase (SOD1). This chain is Copper chaperone for superoxide dismutase, found in Mus musculus (Mouse).